We begin with the raw amino-acid sequence, 355 residues long: Uroporphyrinogen decarboxylase (355 aa).

Substrate contacts are provided by residues Arg27 to Arg31, Phe46, Asp77, Tyr154, Ser209, and His327.

It belongs to the uroporphyrinogen decarboxylase family. As to quaternary structure, homodimer.

The protein localises to the cytoplasm. It carries out the reaction uroporphyrinogen III + 4 H(+) = coproporphyrinogen III + 4 CO2. The protein operates within porphyrin-containing compound metabolism; protoporphyrin-IX biosynthesis; coproporphyrinogen-III from 5-aminolevulinate: step 4/4. Its function is as follows. Catalyzes the decarboxylation of four acetate groups of uroporphyrinogen-III to yield coproporphyrinogen-III. This chain is Uroporphyrinogen decarboxylase, found in Nitrosomonas europaea (strain ATCC 19718 / CIP 103999 / KCTC 2705 / NBRC 14298).